A 291-amino-acid chain; its full sequence is GTP-binding protein RHO4 (291 aa).

Residues 14-31 (GNESNIVSQGSPSSSNLP) show a composition bias toward polar residues. The disordered stretch occupies residues 14 to 45 (GNESNIVSQGSPSSSNLPESPGTLDEKNLPRL). 79 to 86 (GDGAVGKT) is a binding site for GTP. The short motif at 101–109 (YIPTIFENY) is the Effector region element. GTP contacts are provided by residues 127–131 (DTAGQ) and 185–188 (LKSD). Residues 250–273 (THTIKNPFKRNTTRSDIDSSTGDT) are disordered. A phosphoserine mark is found at Ser-264, Ser-268, and Ser-276. Cys-288 is subject to Cysteine methyl ester. Cys-288 carries S-farnesyl cysteine lipidation. A propeptide spans 289–291 (IIM) (removed in mature form).

This sequence belongs to the small GTPase superfamily. Rho family. Interacts with BEM4.

Its subcellular location is the cell membrane. The enzyme catalyses GTP + H2O = GDP + phosphate + H(+). Plays an important role in cell growth. Required to keep the uninucleated state. May be involved in the organization of the cytoskeleton which affects microtubule functions. Most likely RHO3 and RHO4 of S.cerevisiae regulate partially overlapping but different pathways. The sequence is that of GTP-binding protein RHO4 (RHO4) from Saccharomyces cerevisiae (strain ATCC 204508 / S288c) (Baker's yeast).